A 188-amino-acid chain; its full sequence is GTPase KRas (188 aa).

GTP contacts are provided by residues 10-18 (GAGGVGKSA), 29-35 (VDEYDPT), 59-60 (AG), and 116-119 (NKCD). The short motif at 32 to 40 (YDPTIEDSY) is the Effector region element. Residues 168-188 (EKMSKDGKKKKKKTKTKCIIM) form a disordered region. Residue C185 is modified to Cysteine methyl ester. C185 carries the S-farnesyl cysteine lipid modification. Residues 186-188 (IIM) constitute a propeptide, removed in mature form.

Belongs to the small GTPase superfamily. Ras family.

The protein resides in the cell membrane. It is found in the cytoplasm. It carries out the reaction GTP + H2O = GDP + phosphate + H(+). With respect to regulation, alternates between an inactive form bound to GDP and an active form bound to GTP. Activated by a guanine nucleotide-exchange factor (GEF) and inactivated by a GTPase-activating protein (GAP). Its function is as follows. Ras proteins bind GDP/GTP and possess intrinsic GTPase activity. Plays an important role in the regulation of cell proliferation. May play a role in promoting oncogenic events by inducing transcriptional silencing of tumor suppressor genes (TSGs). This chain is GTPase KRas (KRAS), found in Meleagris gallopavo (Wild turkey).